A 194-amino-acid chain; its full sequence is Exopolysaccharide II synthesis transcriptional activator ExpG (194 aa).

In terms of domain architecture, HTH marR-type spans 49-184 (YFELARVMER…AFQTLHRLEL (136 aa)).

Functionally, transcriptional activator of genes for galactoglucan synthesis (exopolysaccharide II or EPS II). This is Exopolysaccharide II synthesis transcriptional activator ExpG (expG) from Rhizobium meliloti (strain 1021) (Ensifer meliloti).